The chain runs to 705 residues: uncharacterized protein (705 aa).

Active-site charge relay system residues include S554 and H676.

It belongs to the peptidase S9A family.

This is an uncharacterized protein from Sinorhizobium fredii (strain NBRC 101917 / NGR234).